Here is a 466-residue protein sequence, read N- to C-terminus: Glutamate--tRNA ligase (466 aa).

The 'HIGH' region motif lies at 10 to 20 (PSPTGYLHVGG). Zn(2+) is bound by residues Cys99, Cys101, Cys126, and Asp128. The short motif at 237–241 (RLSKR) is the 'KMSKS' region element. Lys240 contacts ATP.

This sequence belongs to the class-I aminoacyl-tRNA synthetase family. Glutamate--tRNA ligase type 1 subfamily. As to quaternary structure, monomer. It depends on Zn(2+) as a cofactor.

It is found in the cytoplasm. The enzyme catalyses tRNA(Glu) + L-glutamate + ATP = L-glutamyl-tRNA(Glu) + AMP + diphosphate. Functionally, catalyzes the attachment of glutamate to tRNA(Glu) in a two-step reaction: glutamate is first activated by ATP to form Glu-AMP and then transferred to the acceptor end of tRNA(Glu). The polypeptide is Glutamate--tRNA ligase (Geobacter sulfurreducens (strain ATCC 51573 / DSM 12127 / PCA)).